The primary structure comprises 405 residues: Nodal homolog 2-A (405 aa).

Positions 1-18 are cleaved as a signal peptide; the sequence is MASLGVILFFVIASLIHG. Positions 19-282 are excised as a propeptide; sequence KPIHSERKAA…RVTDTRRPRR (264 aa). Residues asparagine 71, asparagine 172, and asparagine 343 are each glycosylated (N-linked (GlcNAc...) asparagine). Cystine bridges form between cysteine 305-cysteine 371, cysteine 334-cysteine 402, and cysteine 338-cysteine 404.

It belongs to the TGF-beta family. In terms of assembly, homodimer; disulfide-linked. Forms heterodimers with the TGF-beta family member derriere. Interacts with tsku; enhances nodal2 activity. As to expression, first localized to the vegetal region of the blastula. Just prior to gastrulation (stage 10), this expression disappears and instead becomes localized to the dorsal marginal zone, with enrichment in the organizer.

The protein localises to the secreted. Its function is as follows. Cooperation and regulatory loops of multiple nodals are essential for mesendoderm patterning in early embryos. Essential for mesoderm formation and axial patterning during embryonic development. Activates the activin-like signaling pathway to induce dorsal and ventral mesoderm in animal cap ectoderm. In addition, also dorsalizes ventral marginal zone (VMZ) tissues during gastrulation. Induces muscle actin. Appears to act as both a short-range and long-range morphogen. The unprocessed protein inhibits bmp- and wnt-signaling. The protein is Nodal homolog 2-A (nodal2-a) of Xenopus laevis (African clawed frog).